A 65-amino-acid polypeptide reads, in one-letter code: UPF0434 protein VFMJ11_A0475 (65 aa).

Belongs to the UPF0434 family.

The chain is UPF0434 protein VFMJ11_A0475 from Aliivibrio fischeri (strain MJ11) (Vibrio fischeri).